A 308-amino-acid chain; its full sequence is Protoheme IX farnesyltransferase (308 aa).

8 helical membrane passes run 20-40 (LLAY…VTAI), 50-70 (AIHP…ATGA), 102-122 (NALA…WCAT), 124-144 (LLAG…YTLW), 149-169 (TSQN…IGWS), 170-190 (AITG…FFWT), 227-249 (LIYT…WLYG), and 288-308 (YLAV…PTLH).

It belongs to the UbiA prenyltransferase family. Protoheme IX farnesyltransferase subfamily.

It is found in the cell membrane. It catalyses the reaction heme b + (2E,6E)-farnesyl diphosphate + H2O = Fe(II)-heme o + diphosphate. It participates in porphyrin-containing compound metabolism; heme O biosynthesis; heme O from protoheme: step 1/1. Its function is as follows. Converts heme B (protoheme IX) to heme O by substitution of the vinyl group on carbon 2 of heme B porphyrin ring with a hydroxyethyl farnesyl side group. The polypeptide is Protoheme IX farnesyltransferase (Mycobacterium bovis (strain BCG / Pasteur 1173P2)).